Consider the following 358-residue polypeptide: Homoserine O-acetyltransferase (358 aa).

Residues Asn-41–Asp-343 enclose the AB hydrolase-1 domain. The active-site Nucleophile is Ser-143. Arg-212 serves as a coordination point for substrate. Catalysis depends on residues Asp-304 and His-337. Asp-338 is a binding site for substrate.

In terms of assembly, homodimer.

The protein localises to the cytoplasm. The enzyme catalyses L-homoserine + acetyl-CoA = O-acetyl-L-homoserine + CoA. Its pathway is amino-acid biosynthesis; L-methionine biosynthesis via de novo pathway; O-acetyl-L-homoserine from L-homoserine: step 1/1. Functionally, transfers an acetyl group from acetyl-CoA to L-homoserine, forming acetyl-L-homoserine. Utilizes a ping-pong kinetic mechanism in which the acetyl group of acetyl-CoA is initially transferred to the enzyme to form an acetyl-enzyme intermediate before subsequent transfer to homoserine to form the final product, O-acetylhomoserine. The polypeptide is Homoserine O-acetyltransferase (Haemophilus influenzae (strain ATCC 51907 / DSM 11121 / KW20 / Rd)).